We begin with the raw amino-acid sequence, 160 residues long: Major strawberry allergen Fra a 1.05 (160 aa).

Belongs to the BetVI family. Post-translationally, phosphorylated in vivo. Phosphorylation prevents its activity as ribonuclease.

Possesses ribonuclease activity in vitro. The protein is Major strawberry allergen Fra a 1.05 of Fragaria ananassa (Strawberry).